The chain runs to 373 residues: Mannitol-1-phosphate 5-dehydrogenase (373 aa).

An NAD(+)-binding site is contributed by 3–14 (ALHFGAGNIGRG).

Belongs to the mannitol dehydrogenase family.

The catalysed reaction is D-mannitol 1-phosphate + NAD(+) = beta-D-fructose 6-phosphate + NADH + H(+). This Bacillus velezensis (strain DSM 23117 / BGSC 10A6 / LMG 26770 / FZB42) (Bacillus amyloliquefaciens subsp. plantarum) protein is Mannitol-1-phosphate 5-dehydrogenase.